We begin with the raw amino-acid sequence, 136 residues long: Glutamate-rich protein 4 (136 aa).

Residues 92–136 (EEEEEEEQEEKSCVEENKGPEEKQDEERSRSSYPAQRLPDFGMTI) form a disordered region. The span at 101–121 (EKSCVEENKGPEEKQDEERSR) shows a compositional bias: basic and acidic residues.

This Mus musculus (Mouse) protein is Glutamate-rich protein 4 (Erich4).